Consider the following 416-residue polypeptide: MVTRHRVTVLYNAPEDIGNHMRQNDTHLTVRGGSGVVLQQRWLLERTGSLDKSFTRITWRPRADLARSLSVIENELSAGFSVYSNSSDVPERFITNPVYNSFHSEKFDIEQYLPPEVDLNLSWNPEDFTYDISVEPTQIQIVEYRLLKQGEEFTIARVKDEKLEVGVFFVDASDESDVDIGGIRCNWRMDDGKMERCQKTSLLYKQGHIAYNHSTTTTSLYLNEPIGLHPKIMIDLTDFEERPKCMYLMHLQLPLELFIDKFQSSPLLLFGEDDLELPEYSLRDKAWGSESIFELKAGTMNEVTLHTRYIEPSNNKGDKLEVSFDPEVILACDTGDNKVSRNPFYKKGLGYESLFTDDTTFRHLNSTTLLVPIPRPDTKDYSKIKNGTLLCLLISIIYIFSKVFGNNKKKRSVKRE.

At Met1–Lys385 the chain is on the lumenal side. 5 N-linked (GlcNAc...) asparagine glycosylation sites follow: Asn24, Asn85, Asn120, Asn212, and Asn365. Residues Asn386 to Gly405 traverse the membrane as a helical; Signal-anchor for type III membrane protein segment. At Asn406–Glu416 the chain is on the cytoplasmic side.

It belongs to the PIGX family. N-glycosylated.

The protein resides in the endoplasmic reticulum membrane. The protein operates within glycolipid biosynthesis; glycosylphosphatidylinositol-anchor biosynthesis. In terms of biological role, required for proper folding and/or the stability of a subset of proteins in the endoplasmic reticulum. Aids the autocatalytic processing of PRB1. Component of glycosylphosphatidylinositol-mannosyltransferase 1 which transfers the first of the 4 mannoses in the GPI-anchor precursors during GPI-anchor biosynthesis. Probably acts by stabilizing the mannosyltransferase GPI14. This Saccharomyces cerevisiae (strain ATCC 204508 / S288c) (Baker's yeast) protein is Protein PBN1 (PBN1).